A 432-amino-acid polypeptide reads, in one-letter code: MAGQTIIVSGLNPAAILQSTIGGGASPTAAAAENGTRKVIPLSRDALQDFMLSIITQKLQDEKQPFYVLDLGEVVSLMDQWKSSLPNIRPFYAVKCNPEPSFLSILSAMGSNFDCASRAEIEYVLALGISPDRIVFANPCKPESDIIFAAKVGVNLTTYDSEDEVYKIRKHHPKSELLPRIKPMFDGNARCPMGPKYGALPEEVEPLLRAAQAARLTVSGVSFHIGSGDADSNAYLGAIAAAKEVFETAAKLGMSKMTVLDVGGGFTSGHQFTTAAVAVKSALKQHFDDEPELTIIAEPGRFFAETAFTLATTVIGKRVRGELREYWINDGLYGSMNCVLYDHATVNATPLAVLSNRTNVTCGGSKTFPTTVFGPTCDALDTVLRDYQLPELQVNDWLVFPNMGAYTKAAGSNFNGFNTSTIVTHLAYTYPS.

Lys-95 carries the post-translational modification N6-(pyridoxal phosphate)lysine. Pyridoxal 5'-phosphate-binding positions include Ser-227, Gly-265, and 298 to 301; that span reads EPGR. 341-342 contributes to the substrate binding site; the sequence is YD. The active-site Proton donor; shared with dimeric partner is Cys-377. Asp-378 contributes to the substrate binding site. Position 406 (Tyr-406) interacts with pyridoxal 5'-phosphate.

This sequence belongs to the Orn/Lys/Arg decarboxylase class-II family. As to quaternary structure, homodimer. Only the dimer is catalytically active, as the active sites are constructed of residues from both monomers. Pyridoxal 5'-phosphate is required as a cofactor.

The protein localises to the plastid. It localises to the chloroplast. It catalyses the reaction L-lysine + H(+) = cadaverine + CO2. The enzyme catalyses L-ornithine + H(+) = putrescine + CO2. The protein operates within alkaloid biosynthesis; nicotine biosynthesis. It participates in amine and polyamine biosynthesis; putrescine biosynthesis via L-ornithine pathway; putrescine from L-ornithine: step 1/1. Repressed by alpha-difluoromethylornithine (DFMO), 5,5'-dithiobis-(2-nitrobenzoic acid) (DTNB) and salicylaldehyde. Functionally, involved in the biosynthesis of pyridine alkaloid natural products, leading mainly to the production of anabasine, anatabine, nicotine and nornicotine, effective deterrents against herbivores with antiparasitic and pesticide properties (neurotoxins); nornicotine serves as the precursor in the synthesis of the carcinogen compound N'-nitrosonornicotine (NNN). Catalyzes the first and rate-limiting step of polyamine biosynthesis that converts ornithine into putrescine, which is the precursor for the polyamines, spermidine and spermine. Can also use, with a lower efficiency, L-lysine as substrate to produce cadaverine. Polyamines are essential for cell proliferation and are implicated in cellular processes, ranging from DNA replication to apoptosis. The polypeptide is Ornithine decarboxylase, chloroplastic (Nicotiana glutinosa (Tobacco)).